The primary structure comprises 177 residues: Outer membrane lipoprotein Blc (177 aa).

The first 18 residues, 1 to 18 (MRLLPLVAAATAAFLVVA), serve as a signal peptide directing secretion. The N-palmitoyl cysteine moiety is linked to residue cysteine 19. Cysteine 19 carries S-diacylglycerol cysteine lipidation.

The protein belongs to the calycin superfamily. Lipocalin family. In terms of assembly, homodimer.

It localises to the cell outer membrane. Its function is as follows. Involved in the storage or transport of lipids necessary for membrane maintenance under stressful conditions. Displays a binding preference for lysophospholipids. This is Outer membrane lipoprotein Blc (blc) from Escherichia coli O157:H7.